A 626-amino-acid polypeptide reads, in one-letter code: Chaperone protein HtpG (626 aa).

An a; substrate-binding region spans residues 1 to 339 (MSQNQETRGF…SNDLPLNVSR (339 aa)). Residues 340 to 555 (EILQDNKITA…NDQMTTQMAK (216 aa)) form a b region. The c stretch occupies residues 556-626 (LFAAAGQPVP…FIKRINKLLG (71 aa)).

The protein belongs to the heat shock protein 90 family. As to quaternary structure, homodimer.

The protein localises to the cytoplasm. Its function is as follows. Molecular chaperone. Has ATPase activity. The protein is Chaperone protein HtpG of Haemophilus influenzae (strain ATCC 51907 / DSM 11121 / KW20 / Rd).